Consider the following 143-residue polypeptide: Transcriptional regulator MraZ (143 aa).

SpoVT-AbrB domains follow at residues 5–47 (QYEH…SLEE) and 76–119 (AVEC…SKEV).

This sequence belongs to the MraZ family. Forms oligomers.

It localises to the cytoplasm. The protein localises to the nucleoid. The protein is Transcriptional regulator MraZ of Thermoanaerobacter pseudethanolicus (strain ATCC 33223 / 39E) (Clostridium thermohydrosulfuricum).